A 435-amino-acid polypeptide reads, in one-letter code: Cytochrome c biogenesis protein CcsB (435 aa).

3 helical membrane-spanning segments follow: residues 14–34, 72–92, and 162–182; these read LRLA…GTIL, SVWF…CSWR, and VGPL…AWGA.

Belongs to the Ccs1/CcsB family. As to quaternary structure, may interact with CcsA.

The protein resides in the cellular thylakoid membrane. Functionally, required during biogenesis of c-type cytochromes (cytochrome c6 and cytochrome f) at the step of heme attachment. In Synechococcus sp. (strain CC9311), this protein is Cytochrome c biogenesis protein CcsB.